The chain runs to 765 residues: Endothelin-converting enzyme 2 (765 aa).

At 1-60 (MSVALQELGGGGNMVEYKRATLRDEDAPETPVEGGASPDAVEAGFRKRTSRLLGLHTQLE) the chain is on the cytoplasmic side. The chain crosses the membrane as a helical; Signal-anchor for type II membrane protein span at residues 61–81 (LVLAGVSLLLAALLLGCLVAL). Topologically, residues 82 to 765 (GVQYHRDPSH…MNSGQLCEVW (684 aa)) are lumenal. The 673-residue stretch at 93-765 (TCLTEACIRV…MNSGQLCEVW (673 aa)) folds into the Peptidase M13 domain. Disulfide bonds link Cys-94–Cys-99, Cys-117–Cys-750, Cys-125–Cys-710, Cys-181–Cys-430, and Cys-639–Cys-762. Asn-161, Asn-165, Asn-206, Asn-266, Asn-311, Asn-378, and Asn-534 each carry an N-linked (GlcNAc...) asparagine glycan. Residue His-602 participates in Zn(2+) binding. Glu-603 is a catalytic residue. Position 606 (His-606) interacts with Zn(2+). 2 N-linked (GlcNAc...) asparagine glycosylation sites follow: Asn-627 and Asn-635. Residue Glu-662 participates in Zn(2+) binding. Asp-666 serves as the catalytic Proton donor.

The protein belongs to the peptidase M13 family. The cofactor is Zn(2+). As to expression, isoform ECE2-1 and isoform ECE2-2 are expressed in brain and adrenal gland.

The protein resides in the golgi apparatus membrane. It is found in the cytoplasmic vesicle. It localises to the secretory vesicle membrane. The catalysed reaction is Hydrolysis of the 21-Trp-|-Val-22 bond in big endothelin to form endothelin 1.. In terms of biological role, converts big endothelin-1 to endothelin-1. Also involved in the processing of various neuroendocrine peptides, including neurotensin, angiotensin I, substance P, proenkephalin-derived peptides, and prodynorphin-derived peptides. May play a role in amyloid-beta processing. The protein is Endothelin-converting enzyme 2 of Bos taurus (Bovine).